The sequence spans 311 residues: Ribosomal RNA small subunit methyltransferase H (311 aa).

Residues 32–34 (AGH), D52, F79, D100, and Q107 contribute to the S-adenosyl-L-methionine site.

The protein belongs to the methyltransferase superfamily. RsmH family.

It is found in the cytoplasm. It carries out the reaction cytidine(1402) in 16S rRNA + S-adenosyl-L-methionine = N(4)-methylcytidine(1402) in 16S rRNA + S-adenosyl-L-homocysteine + H(+). In terms of biological role, specifically methylates the N4 position of cytidine in position 1402 (C1402) of 16S rRNA. The polypeptide is Ribosomal RNA small subunit methyltransferase H (Staphylococcus aureus (strain COL)).